Reading from the N-terminus, the 204-residue chain is Holliday junction branch migration complex subunit RuvA (204 aa).

The segment at 1–64 (MIGRLRGIIL…EDAQLLFGFN (64 aa)) is domain I. A domain II region spans residues 65-143 (SKPERALFRE…GMHGDLFASD (79 aa)). The segment at 144-155 (APFALTSEMPKE) is flexible linker. The segment at 156–204 (TANDAEGEAVAALTALGYKPQEASRMIVKVGKPDADCETLIREALRAAI) is domain III.

This sequence belongs to the RuvA family. In terms of assembly, homotetramer. Forms an RuvA(8)-RuvB(12)-Holliday junction (HJ) complex. HJ DNA is sandwiched between 2 RuvA tetramers; dsDNA enters through RuvA and exits via RuvB. An RuvB hexamer assembles on each DNA strand where it exits the tetramer. Each RuvB hexamer is contacted by two RuvA subunits (via domain III) on 2 adjacent RuvB subunits; this complex drives branch migration. In the full resolvosome a probable DNA-RuvA(4)-RuvB(12)-RuvC(2) complex forms which resolves the HJ.

Its subcellular location is the cytoplasm. Its function is as follows. The RuvA-RuvB-RuvC complex processes Holliday junction (HJ) DNA during genetic recombination and DNA repair, while the RuvA-RuvB complex plays an important role in the rescue of blocked DNA replication forks via replication fork reversal (RFR). RuvA specifically binds to HJ cruciform DNA, conferring on it an open structure. The RuvB hexamer acts as an ATP-dependent pump, pulling dsDNA into and through the RuvAB complex. HJ branch migration allows RuvC to scan DNA until it finds its consensus sequence, where it cleaves and resolves the cruciform DNA. In Erwinia tasmaniensis (strain DSM 17950 / CFBP 7177 / CIP 109463 / NCPPB 4357 / Et1/99), this protein is Holliday junction branch migration complex subunit RuvA.